Consider the following 500-residue polypeptide: Probable cytochrome P450 514A2 (500 aa).

The helical transmembrane segment at 4 to 24 (IYTIILTIIILVLIISIKDLF) threads the bilayer. C446 serves as a coordination point for heme.

It belongs to the cytochrome P450 family. Heme is required as a cofactor.

It localises to the membrane. The sequence is that of Probable cytochrome P450 514A2 (cyp514A2) from Dictyostelium discoideum (Social amoeba).